The chain runs to 449 residues: Methionine aminopeptidase 2 (449 aa).

Residues 1–91 form a disordered region; it reads MAAQAAPELA…PRIPLTTLFP (91 aa). Over residues 34 to 50 the composition is skewed to acidic residues; that stretch reads EEAENEGDSEDDRDDEQ. A compositionally biased stretch (basic residues) spans 61–75; the sequence is KKKKKKRPKKKKKTA. Residue His-199 participates in substrate binding. 3 residues coordinate a divalent metal cation: Asp-219, Asp-230, and His-299. Substrate is bound at residue His-307. The a divalent metal cation site is built by Glu-335 and Glu-430.

Belongs to the peptidase M24A family. Methionine aminopeptidase eukaryotic type 2 subfamily. It depends on Co(2+) as a cofactor. Zn(2+) serves as cofactor. Requires Mn(2+) as cofactor. The cofactor is Fe(2+).

The protein localises to the cytoplasm. The enzyme catalyses Release of N-terminal amino acids, preferentially methionine, from peptides and arylamides.. In terms of biological role, cotranslationally removes the N-terminal methionine from nascent proteins. The N-terminal methionine is often cleaved when the second residue in the primary sequence is small and uncharged (Met-Ala-, Cys, Gly, Pro, Ser, Thr, or Val). The chain is Methionine aminopeptidase 2 from Trichophyton verrucosum (strain HKI 0517).